A 209-amino-acid polypeptide reads, in one-letter code: Large ribosomal subunit protein bL25 (209 aa).

The disordered stretch occupies residues 190 to 209 (PDASAAPVAAPAAPAKKGKK).

This sequence belongs to the bacterial ribosomal protein bL25 family. CTC subfamily. In terms of assembly, part of the 50S ribosomal subunit; part of the 5S rRNA/L5/L18/L25 subcomplex. Contacts the 5S rRNA. Binds to the 5S rRNA independently of L5 and L18.

Its function is as follows. This is one of the proteins that binds to the 5S RNA in the ribosome where it forms part of the central protuberance. The chain is Large ribosomal subunit protein bL25 from Delftia acidovorans (strain DSM 14801 / SPH-1).